Consider the following 452-residue polypeptide: Trigger factor (452 aa).

Residues 162–247 enclose the PPIase FKBP-type domain; the sequence is GDTVTIDYKG…IHEVKSKQLP (86 aa). The segment at 427-452 is disordered; that stretch reads AKAKLEAKEAEEAEDKEEAEDKKENK.

This sequence belongs to the FKBP-type PPIase family. Tig subfamily.

It localises to the cytoplasm. It catalyses the reaction [protein]-peptidylproline (omega=180) = [protein]-peptidylproline (omega=0). Involved in protein export. Acts as a chaperone by maintaining the newly synthesized protein in an open conformation. Functions as a peptidyl-prolyl cis-trans isomerase. The protein is Trigger factor of Lactobacillus helveticus (strain DPC 4571).